We begin with the raw amino-acid sequence, 182 residues long: Isopentenyl-diphosphate Delta-isomerase (182 aa).

Residues histidine 25 and histidine 32 each coordinate Mn(2+). Residues 30 to 164 (LLHLAFSSWL…PWAFSPWMVM (135 aa)) enclose the Nudix hydrolase domain. Cysteine 67 is an active-site residue. Mn(2+) is bound at residue histidine 69. Position 87 (glutamate 87) interacts with Mg(2+). Residues glutamate 114 and glutamate 116 each coordinate Mn(2+). Glutamate 116 is an active-site residue.

Belongs to the IPP isomerase type 1 family. Homodimer. Mg(2+) serves as cofactor. Requires Mn(2+) as cofactor.

The protein localises to the cytoplasm. The enzyme catalyses isopentenyl diphosphate = dimethylallyl diphosphate. The protein operates within isoprenoid biosynthesis; dimethylallyl diphosphate biosynthesis; dimethylallyl diphosphate from isopentenyl diphosphate: step 1/1. Its function is as follows. Catalyzes the 1,3-allylic rearrangement of the homoallylic substrate isopentenyl (IPP) to its highly electrophilic allylic isomer, dimethylallyl diphosphate (DMAPP). The chain is Isopentenyl-diphosphate Delta-isomerase from Escherichia coli O17:K52:H18 (strain UMN026 / ExPEC).